Reading from the N-terminus, the 249-residue chain is Probable septum site-determining protein MinC (249 aa).

Residues alanine 117 to alanine 138 form a disordered region.

This sequence belongs to the MinC family. As to quaternary structure, interacts with MinD and FtsZ.

Functionally, cell division inhibitor that blocks the formation of polar Z ring septums. Rapidly oscillates between the poles of the cell to destabilize FtsZ filaments that have formed before they mature into polar Z rings. Prevents FtsZ polymerization. The sequence is that of Probable septum site-determining protein MinC from Xanthomonas campestris pv. campestris (strain 8004).